Consider the following 49-residue polypeptide: Glutathione peroxidase (49 aa).

This sequence belongs to the glutathione peroxidase family.

The catalysed reaction is 2 glutathione + H2O2 = glutathione disulfide + 2 H2O. Inhibited by Cu(2+), SDS and DTT. Activity is slightly increased by Fe(2+), Mn(2+), triton X-100 and EDTA. Its function is as follows. Glutathione peroxidase which may protect the cell from oxidative damage. This is Glutathione peroxidase from Lactiplantibacillus plantarum (Lactobacillus plantarum).